The chain runs to 870 residues: Leucine--tRNA ligase (870 aa).

The 'HIGH' region motif lies at 43-53 (PYPSGRLHMGH). The short motif at 626–630 (KMSKS) is the 'KMSKS' region element. Lysine 629 provides a ligand contact to ATP.

This sequence belongs to the class-I aminoacyl-tRNA synthetase family.

Its subcellular location is the cytoplasm. The catalysed reaction is tRNA(Leu) + L-leucine + ATP = L-leucyl-tRNA(Leu) + AMP + diphosphate. The chain is Leucine--tRNA ligase from Pseudoalteromonas atlantica (strain T6c / ATCC BAA-1087).